The chain runs to 145 residues: Large ribosomal subunit protein uL13 (145 aa).

This sequence belongs to the universal ribosomal protein uL13 family. As to quaternary structure, part of the 50S ribosomal subunit.

In terms of biological role, this protein is one of the early assembly proteins of the 50S ribosomal subunit, although it is not seen to bind rRNA by itself. It is important during the early stages of 50S assembly. The chain is Large ribosomal subunit protein uL13 from Staphylococcus aureus (strain Mu3 / ATCC 700698).